Here is a 363-residue protein sequence, read N- to C-terminus: Flagellar P-ring protein (363 aa).

An N-terminal signal peptide occupies residues 1 to 20; it reads MKIKVLLAVALLAMTVPVKA.

It belongs to the FlgI family. As to quaternary structure, the basal body constitutes a major portion of the flagellar organelle and consists of four rings (L,P,S, and M) mounted on a central rod.

It is found in the periplasm. The protein localises to the bacterial flagellum basal body. In terms of biological role, assembles around the rod to form the L-ring and probably protects the motor/basal body from shearing forces during rotation. The sequence is that of Flagellar P-ring protein from Shewanella amazonensis (strain ATCC BAA-1098 / SB2B).